The chain runs to 473 residues: Arginine biosynthesis bifunctional protein ArgJ, mitochondrial (473 aa).

Residues T201, K230, T241, E328, N468, and T473 each contribute to the substrate site. The Nucleophile role is filled by T241.

It belongs to the ArgJ family. As to quaternary structure, heterodimer of an alpha and a beta chain. In terms of processing, the alpha and beta chains are autoproteolytically processed from a single precursor protein within the mitochondrion.

The protein localises to the mitochondrion matrix. The catalysed reaction is N(2)-acetyl-L-ornithine + L-glutamate = N-acetyl-L-glutamate + L-ornithine. It carries out the reaction L-glutamate + acetyl-CoA = N-acetyl-L-glutamate + CoA + H(+). Its pathway is amino-acid biosynthesis; L-arginine biosynthesis; L-ornithine and N-acetyl-L-glutamate from L-glutamate and N(2)-acetyl-L-ornithine (cyclic): step 1/1. The protein operates within amino-acid biosynthesis; L-arginine biosynthesis; N(2)-acetyl-L-ornithine from L-glutamate: step 1/4. Catalyzes two activities which are involved in the cyclic version of arginine biosynthesis: the synthesis of acetylglutamate from glutamate and acetyl-CoA, and of ornithine by transacetylation between acetylornithine and glutamate. The chain is Arginine biosynthesis bifunctional protein ArgJ, mitochondrial from Ajellomyces capsulatus (strain G186AR / H82 / ATCC MYA-2454 / RMSCC 2432) (Darling's disease fungus).